We begin with the raw amino-acid sequence, 252 residues long: Octanoyltransferase (252 aa).

A compositionally biased stretch (low complexity) spans 1–21 (MPSAPAAPAAPAAPDAAASVA). The disordered stretch occupies residues 1–22 (MPSAPAAPAAPAAPDAAASVAP). Residues 56-237 (PDTDDEIWVV…RLIAHLDGAT (182 aa)) enclose the BPL/LPL catalytic domain. Substrate contacts are provided by residues 96–103 (RGGQITYH), 168–170 (ALG), and 181–183 (GLS). Cys199 serves as the catalytic Acyl-thioester intermediate.

The protein belongs to the LipB family.

It localises to the cytoplasm. The catalysed reaction is octanoyl-[ACP] + L-lysyl-[protein] = N(6)-octanoyl-L-lysyl-[protein] + holo-[ACP] + H(+). The protein operates within protein modification; protein lipoylation via endogenous pathway; protein N(6)-(lipoyl)lysine from octanoyl-[acyl-carrier-protein]: step 1/2. Functionally, catalyzes the transfer of endogenously produced octanoic acid from octanoyl-acyl-carrier-protein onto the lipoyl domains of lipoate-dependent enzymes. Lipoyl-ACP can also act as a substrate although octanoyl-ACP is likely to be the physiological substrate. The chain is Octanoyltransferase from Burkholderia pseudomallei (strain 668).